Here is a 224-residue protein sequence, read N- to C-terminus: Urease accessory protein UreF (224 aa).

Belongs to the UreF family. As to quaternary structure, ureD, UreF and UreG form a complex that acts as a GTP-hydrolysis-dependent molecular chaperone, activating the urease apoprotein by helping to assemble the nickel containing metallocenter of UreC. The UreE protein probably delivers the nickel.

The protein resides in the cytoplasm. Required for maturation of urease via the functional incorporation of the urease nickel metallocenter. The chain is Urease accessory protein UreF from Escherichia coli O157:H7.